A 548-amino-acid polypeptide reads, in one-letter code: Chaperone Ric-8A (548 aa).

Disordered stretches follow at residues 443 to 484 (DPGH…EGMT) and 517 to 548 (GKMT…SDTN).

The protein belongs to the synembryn family.

It localises to the cytoplasm. Its subcellular location is the cell cortex. Functionally, chaperone that specifically binds and folds nascent G alpha proteins prior to G protein heterotrimer formation, promoting their stability and activity: folds GNAI1, GNAO1, GNA13 and GNAQ. Does not fold G(s) G-alpha proteins GNAS nor GNAL. Also acts as a guanine nucleotide exchange factor (GEF) for G alpha proteins by stimulating exchange of bound GDP for free GTP. The sequence is that of Chaperone Ric-8A (ric8a) from Danio rerio (Zebrafish).